A 121-amino-acid polypeptide reads, in one-letter code: Secretin (121 aa).

The signal sequence occupies residues 1–18 (MAPRPLLLLLLLLGGSAA). Positions 19 to 26 (RPAPPRAR) are excised as a propeptide. A Valine amide modification is found at Val-54. Ser-58 carries the phosphoserine modification. The propeptide occupies 58-121 (SEQDAENSMA…AAAEGTLRPR (64 aa)).

The protein belongs to the glucagon family.

The protein resides in the secreted. Its function is as follows. Hormone involved in different processes, such as regulation of the pH of the duodenal content, food intake and water homeostasis. Exerts its biological effects by binding to secretin receptor (SCTR), a G-protein coupled receptor expressed in the basolateral domain of several cells. Acts as a key gastrointestinal hormone by regulating the pH of the duodenal content. Secreted by S cells of the duodenum in the crypts of Lieberkuehn and regulates the pH of the duodenum by (1) inhibiting the secretion of gastric acid from the parietal cells of the stomach and (2) stimulating the production of bicarbonate (NaHCO(3)) from the ductal cells of the pancreas. Production of bicarbonate is essential to neutralize the pH and ensure no damage is done to the small intestine by the gastric acid. In addition to regulating the pH of the duodenal content, plays a central role in diet induced thermogenesis: acts as a non-sympathetic brown fat (BAT) activator mediating prandial thermogenesis, which consequentially induces satiation. Mechanistically, secretin released by the gut after a meal binds to secretin receptor (SCTR) in brown adipocytes, activating brown fat thermogenesis by stimulating lipolysis, which is sensed in the brain and promotes satiation. Also able to stimulate lipolysis in white adipocytes. Also plays an important role in cellular osmoregulation: released into the systemic circulation in response to hyperosmolality and acts at different levels in the hypothalamus, pituitary and kidney to regulate water homeostasis. Also plays a role in the central nervous system, possibly by acting as a neuropeptide hormone: required for hippocampal synaptic function and neural progenitor cells maintenance. This is Secretin from Homo sapiens (Human).